The sequence spans 840 residues: 9-beta-pimara-7,15-diene synthase, chloroplastic (840 aa).

Residues 1–56 constitute a chloroplast transit peptide; that stretch reads MASPMEAVARSSLVLAPRRRRALGLLPAAAAPFVLDCRRRHNGGMRRPHVSFACSA. Residues D589, D593, N733, S737, and E741 each contribute to the Mg(2+) site. The DDXXD motif signature appears at 589-593; it reads DDFFD.

It belongs to the terpene synthase family. Requires Mg(2+) as cofactor.

The protein resides in the plastid. It localises to the chloroplast. The enzyme catalyses 9alpha-copalyl diphosphate = 9beta-pimara-7,15-diene + diphosphate. Functionally, involved in the biosynthesis of momilactone A and B phytoalexins. Catalyzes the conversion of syn-copalyl diphosphate to the phytoalexin precursor syn-pimara-7,15-diene. The polypeptide is 9-beta-pimara-7,15-diene synthase, chloroplastic (Oryza sativa subsp. indica (Rice)).